Here is a 1863-residue protein sequence, read N- to C-terminus: E3 ubiquitin-protein ligase ubr3 (1863 aa).

The segment at 80–151 (TLCGLVWTAN…ESGFCNRHRL (72 aa)) adopts a UBR-type zinc-finger fold. Disordered stretches follow at residues 302 to 330 (LDDS…SSTK), 970 to 995 (PEVE…SATF), and 1128 to 1152 (IPPK…RARE). Composition is skewed to basic and acidic residues over residues 971 to 984 (EVER…ERET) and 1134 to 1152 (SPGD…RARE). An RING-type; degenerate zinc finger spans residues 1270–1328 (DSSCLQSVSIGWDGGVYVQTCGHTLHIDCHKSYMESLRNDQVLQGISVDKGEFTCPLCR).

This sequence belongs to the E3 ubiquitin-protein ligase UBR1-like family.

The enzyme catalyses S-ubiquitinyl-[E2 ubiquitin-conjugating enzyme]-L-cysteine + [acceptor protein]-L-lysine = [E2 ubiquitin-conjugating enzyme]-L-cysteine + N(6)-ubiquitinyl-[acceptor protein]-L-lysine.. It functions in the pathway protein modification; protein ubiquitination. In terms of biological role, E3 ubiquitin-protein ligase which is a component of the N-end rule pathway. Recognizes and binds to proteins bearing specific N-terminal residues, leading to their ubiquitination and subsequent degradation. Positively regulates hedgehog/shh-signaling pathways that function in eye development, neuronal specification and somite development. Activation of shh up-regulates transcription of ubr3, which in turn promotes hedgehog/shh signaling possibly by controlling negative regulators such as Kif7. The sequence is that of E3 ubiquitin-protein ligase ubr3 from Danio rerio (Zebrafish).